A 6061-amino-acid chain; its full sequence is Intermembrane lipid transfer protein vps13B (6061 aa).

Residues 2-115 (FESLVADIIA…QLELKRKKLE (114 aa)) form the Chorein N-terminal domain. Disordered stretches follow at residues 590-623 (PKYKRHQENKENKENQENQENENKNEINNNNNNK), 803-828 (DIKNSDNNNNNISDNINNNNNINNKN), 1386-1414 (QQQQQQEEEQQQKEEEQHGGEFDLQNVSS), 1604-1644 (SSNN…GTLS), 2747-2784 (QTNQNNQKNRNPFKFYDQSGASNNNNDNDNDEYDEDQE), 2950-2972 (GLNNSFDLNNSGGGNNNNNNSST), 3364-3401 (LNRNSNSDSDNEENHNNNQNNQNNIDDDDGDGDDDDDD), 3855-3876 (QQQQPIINGDYGGIDSNNRNKK), 4011-4068 (QQQQ…FKNN), 4107-4132 (ELEKKKRERKENSKSKSLVAPDRPDE), 4262-4297 (NSSNNNNNNNNNGLSASTSNNLNNTMNDSNNNYNGR), 4321-4442 (SQSI…TSPG), 4601-4631 (TSSPSSSSNKVNNNYNNMDDEEDKKISKKSL), 4753-4797 (NNNN…TQEF), 4861-4882 (NAGGSSHYSSNGSNGSFSSISQ), 5003-5030 (LATKGKDNNKDNSNNNNNNNNNNNDGIE), and 5372-5429 (NINN…IGQD). The span at 595–614 (HQENKENKENQENQENENKN) shows a compositional bias: basic and acidic residues. The span at 1395–1406 (QQQKEEEQHGGE) shows a compositional bias: basic and acidic residues. The span at 2747–2756 (QTNQNNQKNR) shows a compositional bias: polar residues. The segment covering 2774–2784 (NDNDEYDEDQE) has biased composition (acidic residues). The span at 3388-3401 (IDDDDGDGDDDDDD) shows a compositional bias: acidic residues. Basic and acidic residues predominate over residues 4015–4024 (QEKEKEIEKE). Residues 4031–4040 (LKNNNNISIN) show a composition bias toward low complexity. The span at 4041 to 4057 (DNDDDDDDDDNDNDENN) shows a compositional bias: acidic residues. Over residues 4058 to 4068 (NENYEFNFKNN) the composition is skewed to low complexity. Basic and acidic residues predominate over residues 4107–4120 (ELEKKKRERKENSK). 2 stretches are compositionally biased toward low complexity: residues 4330 to 4383 (TTTT…VGSN) and 4399 to 4429 (NNNNNNNNNNNNNNNNNNNNNNNNNNNNNNN). Positions 4430-4441 (SNDNQVNFSTSP) are enriched in polar residues. 2 stretches are compositionally biased toward low complexity: residues 4601–4617 (TSSPSSSSNKVNNNYNN) and 4753–4784 (NNNNNNNDVNNNNTNNNNNNNNNNNNNKSNEN). The segment covering 4785–4794 (SQDQPPSIKT) has biased composition (polar residues). Composition is skewed to low complexity over residues 5013-5030 (DNSNNNNNNNNNNNDGIE) and 5372-5384 (NINNNNNNLNNDN). Positions 5385-5409 (NKNKNNNDKNKNNDKNNKNNNDKNN) are enriched in basic and acidic residues. Over residues 5410–5421 (NDNNNNNNNNNN) the composition is skewed to low complexity.

The protein belongs to the VPS13 family.

The protein resides in the membrane. Mediates the transfer of lipids between membranes at organelle contact sites. This chain is Intermembrane lipid transfer protein vps13B (vps13B), found in Dictyostelium discoideum (Social amoeba).